Here is a 189-residue protein sequence, read N- to C-terminus: Elongation factor P (189 aa).

Belongs to the elongation factor P family.

It localises to the cytoplasm. The protein operates within protein biosynthesis; polypeptide chain elongation. Its function is as follows. Involved in peptide bond synthesis. Stimulates efficient translation and peptide-bond synthesis on native or reconstituted 70S ribosomes in vitro. Probably functions indirectly by altering the affinity of the ribosome for aminoacyl-tRNA, thus increasing their reactivity as acceptors for peptidyl transferase. This chain is Elongation factor P, found in Pseudomonas syringae pv. tomato (strain ATCC BAA-871 / DC3000).